We begin with the raw amino-acid sequence, 62 residues long: Delta-theraphotoxin-Cg1a 1 (62 aa).

Positions 1–21 (MKTSILFVIFSLALLFALSAA) are cleaved as a signal peptide. Residues 22-29 (TEIEETDR) constitute a propeptide that is removed on maturation. Intrachain disulfides connect Cys-31-Cys-46, Cys-38-Cys-51, and Cys-45-Cys-58.

The protein belongs to the neurotoxin 10 (Hwtx-1) family. 33 (Jztx-1) subfamily. Expressed by the venom gland.

It is found in the secreted. Functionally, inhibits voltage-gated sodium channels, preferentially subtype Nav1.5/SCN5A (in cardiac myocytes), but also Nav1.6/SCN8A and Nav1.7/SCN9A (TTX-sensitive Nav in rat DRG neurons) and invertebrate Nav (in insect neurons) as well as voltage-gated potassium channels of the subtype Kv2.1/KCNB1. Is suggested to bind to site 3 of the sodium channels and inhibit the inactivation of the activated channels, thereby blocking neuronal transmission. On potassium channels, inhibits activation of channels with an IC(50) of 8.05 uM through a voltage sensor-trapping mechanism. Increases muscle contraction in several assays (mouse phrenic nerve-diaphragm, toad heart, rat vas deferens) and is suggested to act both presynaptically and postsynaptically. Moderately inhibits voltage-gated sodium channels and weakly inhibits voltage-gated potassium channel. Inhibits the inactivation of rat Nav1.2/SCN2A (IC(50)=870 nM), rat Nav1.3/SCN3A (IC(50)=845 nM), rat Nav1.4/SCN4A (IC(50)=339 nM), human Nav1.5/SCN5A (IC(50)=335 nM) and human Nav1.7/SCN9A sodium channels (IC(50)=348 nM). The toxin delays the inactivation of sodium channels without affecting the activation and steady-state inactivation kinetics in the physiological range of voltages. Site-directed mutagenesis of the sodium channel indicates that the toxin interacts with site 3 located at the extracellular S3-S4 linker of domain IV. On potassium channels, it inhibits activation of channels with an IC(50) of 8.05 uM through a voltage sensor-trapping mechanism. It increases muscle contraction in several assays (mouse phrenic nerve-diaphragm, toad heart, rat vas deferens) and is suggested to act both presynaptically and postsynaptically. The sequence is that of Delta-theraphotoxin-Cg1a 1 from Chilobrachys guangxiensis (Chinese earth tiger tarantula).